Reading from the N-terminus, the 156-residue chain is 6,7-dimethyl-8-ribityllumazine synthase (156 aa).

Residues Phe-23, 57-59, and 81-83 contribute to the 5-amino-6-(D-ribitylamino)uracil site; these read AYE and AII. 86 to 87 serves as a coordination point for (2S)-2-hydroxy-3-oxobutyl phosphate; that stretch reads GT. His-89 functions as the Proton donor in the catalytic mechanism. 5-amino-6-(D-ribitylamino)uracil is bound at residue Phe-114. Arg-128 is a binding site for (2S)-2-hydroxy-3-oxobutyl phosphate.

Belongs to the DMRL synthase family.

It carries out the reaction (2S)-2-hydroxy-3-oxobutyl phosphate + 5-amino-6-(D-ribitylamino)uracil = 6,7-dimethyl-8-(1-D-ribityl)lumazine + phosphate + 2 H2O + H(+). The protein operates within cofactor biosynthesis; riboflavin biosynthesis; riboflavin from 2-hydroxy-3-oxobutyl phosphate and 5-amino-6-(D-ribitylamino)uracil: step 1/2. Functionally, catalyzes the formation of 6,7-dimethyl-8-ribityllumazine by condensation of 5-amino-6-(D-ribitylamino)uracil with 3,4-dihydroxy-2-butanone 4-phosphate. This is the penultimate step in the biosynthesis of riboflavin. In Helicobacter pylori (strain J99 / ATCC 700824) (Campylobacter pylori J99), this protein is 6,7-dimethyl-8-ribityllumazine synthase.